The chain runs to 1257 residues: Period circadian protein homolog 2 (1257 aa).

Positions methionine 1–glycine 59 are disordered. A compositionally biased stretch (low complexity) spans serine 8–glutamine 25. The segment covering serine 35 to serine 53 has biased composition (polar residues). Residues leucine 109–valine 118 carry the Nuclear export signal 1 motif. Positions isoleucine 179–leucine 246 constitute a PAS 1 domain. The LXXLL signature appears at leucine 306–leucine 310. Residues tyrosine 319 to glutamine 385 enclose the PAS 2 domain. The region spanning tyrosine 393–proline 436 is the PAC domain. The Nuclear export signal 2 motif lies at leucine 460–methionine 469. A disordered region spans residues proline 471 to lysine 567. The interval serine 478–serine 482 is important for protein stability. Polar residues-rich tracts occupy residues methionine 493–glutamine 504 and serine 518–serine 528. The segment at arginine 510 to lysine 709 is CSNK1E binding domain. 5 positions are modified to phosphoserine: serine 525, serine 528, serine 531, serine 538, and serine 544. Over residues glutamate 541–threonine 555 the composition is skewed to polar residues. Threonine 554 is modified (phosphothreonine). Phosphoserine occurs at positions 659, 693, 697, 706, 758, and 763. Disordered stretches follow at residues aspartate 678–serine 706 and arginine 757–alanine 833. The short motif at lysine 778–arginine 794 is the Nuclear localization signal element. Residues lysine 779–lysine 792 show a composition bias toward basic residues. The span at serine 821–serine 832 shows a compositional bias: low complexity. The residue at position 858 (threonine 858) is a Phosphothreonine. The tract at residues glutamate 882–leucine 1067 is interaction with PPARG. Serine 939 is subject to Phosphoserine. Threonine 964 carries the post-translational modification Phosphothreonine. Phosphoserine is present on serine 971. The Nuclear export signal 3 motif lies at leucine 983–leucine 990. Residues alanine 993–isoleucine 1044 are disordered. Low complexity predominate over residues serine 996–leucine 1014. Polar residues predominate over residues serine 1033–isoleucine 1044. Residues leucine 1051 to leucine 1055 carry the LXXLL motif. Positions serine 1070 to serine 1089 are enriched in low complexity. Residues serine 1070–isoleucine 1108 form a disordered region. Over residues arginine 1090–isoleucine 1108 the composition is skewed to polar residues. Position 1126 is a phosphoserine (serine 1126). The tract at residues serine 1157–threonine 1257 is CRY binding domain. The segment at glutamate 1226–threonine 1257 is disordered.

Homodimer. Component of the circadian core oscillator, which includes the CRY proteins, CLOCK or NPAS2, BMAL1 or BMAL2, CSNK1D and/or CSNK1E, TIMELESS, and the PER proteins. Interacts with CLOCK-BMAL1 (off DNA). Interacts directly with PER1 and PER3, and through a C-terminal domain, with CRY1 and CRY2. Interacts (via PAS 2 domain) with TIMELESS. Interacts with NFIL3. Different large complexes have been identified with different repressive functions. The core of PER complexes is composed of at least PER1, PER2, PER3, CRY1, CRY2, CSNK1D and/or CSNK1E. The large PER complex involved in the repression of transcriptional termination is composed of at least PER2, CDK9, DDX5, DHX9, NCBP1 and POLR2A (active). The large PER complex involved in the histone deacetylation is composed of at least HDAC1, PER2, SFPQ and SIN3A. The large PER complex involved in the histone methylation is composed of at least PER2, CBX3, TRIM28, SUV39H1 and/or SUV39H2; CBX3 mediates the formation of the complex. Interacts with SETX; the interaction inhibits termination of circadian target genes. Interacts with the nuclear receptors HNF4A, NR1D1, NR4A2, RORA, PPARA, PPARG and THRA; the interaction with at least PPARG is ligand dependent. Interacts with PML. Interacts (phosphorylated) with BTRC and FBXW11; the interactions trigger proteasomal degradation. Interacts with NONO and SFPQ. Interacts with CAVIN3. Interacts with MAGEL2. Interacts with MAP1LC3B. Interacts with HNF4A. Acetylated. Deacetylated by SIRT1, resulting in decreased protein stability. Deacetylated by SIRT6, preventing its degradation by the proteasome, resulting in increased protein stability. Post-translationally, phosphorylated by CSNK1E and CSNK1D. Phosphorylation results in PER2 protein degradation. May be dephosphorylated by PP1. In terms of processing, ubiquitinated, leading to its proteasomal degradation. Ubiquitination may be inhibited by CRY1. In terms of tissue distribution, expressed in all tissues examined including eye, brain, heart, lung, spleen, liver, pancreas and kidney. In the CNS, highly expressed in the SCN, internal granular layer of granular cells of the olfactory bulb, tuberculum olfactorium, piriform cortex, gyrus dentatus of the hippocampus, cerebellum, pars tuberalis/median eminence, and pituitary, and moderately in the tenia tecta, caudate putamen, accumbens nucleus, superior and inferior colliculus and pineal gland.

The protein localises to the nucleus. Its subcellular location is the cytoplasm. The protein resides in the perinuclear region. Transcriptional repressor which forms a core component of the circadian clock. The circadian clock, an internal time-keeping system, regulates various physiological processes through the generation of approximately 24 hour circadian rhythms in gene expression, which are translated into rhythms in metabolism and behavior. It is derived from the Latin roots 'circa' (about) and 'diem' (day) and acts as an important regulator of a wide array of physiological functions including metabolism, sleep, body temperature, blood pressure, endocrine, immune, cardiovascular, and renal function. Consists of two major components: the central clock, residing in the suprachiasmatic nucleus (SCN) of the brain, and the peripheral clocks that are present in nearly every tissue and organ system. Both the central and peripheral clocks can be reset by environmental cues, also known as Zeitgebers (German for 'timegivers'). The predominant Zeitgeber for the central clock is light, which is sensed by retina and signals directly to the SCN. The central clock entrains the peripheral clocks through neuronal and hormonal signals, body temperature and feeding-related cues, aligning all clocks with the external light/dark cycle. Circadian rhythms allow an organism to achieve temporal homeostasis with its environment at the molecular level by regulating gene expression to create a peak of protein expression once every 24 hours to control when a particular physiological process is most active with respect to the solar day. Transcription and translation of core clock components (CLOCK, NPAS2, BMAL1, BMAL2, PER1, PER2, PER3, CRY1 and CRY2) plays a critical role in rhythm generation, whereas delays imposed by post-translational modifications (PTMs) are important for determining the period (tau) of the rhythms (tau refers to the period of a rhythm and is the length, in time, of one complete cycle). A diurnal rhythm is synchronized with the day/night cycle, while the ultradian and infradian rhythms have a period shorter and longer than 24 hours, respectively. Disruptions in the circadian rhythms contribute to the pathology of cardiovascular diseases, cancer, metabolic syndrome and aging. A transcription/translation feedback loop (TTFL) forms the core of the molecular circadian clock mechanism. Transcription factors, CLOCK or NPAS2 and BMAL1 or BMAL2, form the positive limb of the feedback loop, act in the form of a heterodimer and activate the transcription of core clock genes and clock-controlled genes (involved in key metabolic processes), harboring E-box elements (5'-CACGTG-3') within their promoters. The core clock genes: PER1/2/3 and CRY1/2 which are transcriptional repressors form the negative limb of the feedback loop and interact with the CLOCK|NPAS2-BMAL1|BMAL2 heterodimer inhibiting its activity and thereby negatively regulating their own expression. This heterodimer also activates nuclear receptors NR1D1/2 and RORA/B/G, which form a second feedback loop and which activate and repress BMAL1 transcription, respectively. PER1 and PER2 proteins transport CRY1 and CRY2 into the nucleus with appropriate circadian timing, but also contribute directly to repression of clock-controlled target genes through interaction with several classes of RNA-binding proteins, helicases and others transcriptional repressors. PER appears to regulate circadian control of transcription by at least three different modes. First, interacts directly with the CLOCK-BMAL1 at the tail end of the nascent transcript peak to recruit complexes containing the SIN3-HDAC that remodel chromatin to repress transcription. Second, brings H3K9 methyltransferases such as SUV39H1 and SUV39H2 to the E-box elements of the circadian target genes, like PER2 itself or PER1. The recruitment of each repressive modifier to the DNA seems to be very precisely temporally orchestrated by the large PER complex, the deacetylases acting before than the methyltransferases. Additionally, large PER complexes are also recruited to the target genes 3' termination site through interactions with RNA-binding proteins and helicases that may play a role in transcription termination to regulate transcription independently of CLOCK-BMAL1 interactions. Recruitment of large PER complexes to the elongating polymerase at PER and CRY termination sites inhibited SETX action, impeding RNA polymerase II release and thereby repressing transcriptional reinitiation. May propagate clock information to metabolic pathways via the interaction with nuclear receptors. Coactivator of PPARA and corepressor of NR1D1, binds rhythmically at the promoter of nuclear receptors target genes like BMAL1 or G6PC1. Directly and specifically represses PPARG proadipogenic activity by blocking PPARG recruitment to target promoters and thereby transcriptional activation. Required for fatty acid and lipid metabolism, is involved as well in the regulation of circulating insulin levels. Plays an important role in the maintenance of cardiovascular functions through the regulation of NO and vasodilatatory prostaglandins production in aortas. Controls circadian glutamate uptake in synaptic vesicles through the regulation of VGLUT1 expression. May also be involved in the regulation of inflammatory processes. Represses the CLOCK-BMAL1 induced transcription of BHLHE40/DEC1 and ATF4. Negatively regulates the formation of the TIMELESS-CRY1 complex by competing with TIMELESS for binding to CRY1. In Rattus norvegicus (Rat), this protein is Period circadian protein homolog 2.